The chain runs to 1162 residues: Carbamoyl phosphate synthase large chain (1162 aa).

The interval 1–456 is carboxyphosphate synthetic domain; it reads MPKRTDIKSI…SLQKALRGLE (456 aa). Arginine 129, arginine 222, glycine 228, glycine 229, glutamate 261, valine 263, glutamate 268, glycine 294, valine 295, histidine 296, glutamine 338, and glutamate 352 together coordinate ATP. An ATP-grasp 1 domain is found at 186-381; it reads ETEWQLGEVE…IAKVAAKLAV (196 aa). Residues glutamine 338, glutamate 352, and asparagine 354 each contribute to the Mg(2+) site. The Mn(2+) site is built by glutamine 338, glutamate 352, and asparagine 354. Residues 457–613 are oligomerization domain; sequence TGLTGFDEIA…PFVGQPRSEA (157 aa). The segment at 614 to 1025 is carbamoyl phosphate synthetic domain; the sequence is EVSDRKKVVI…AFAKAQLGAG (412 aa). Residues 742–954 form the ATP-grasp 2 domain; sequence QKLLIKLDLN…IAKVAARIMA (213 aa). The ATP site is built by arginine 778, threonine 838, leucine 840, glutamate 845, glycine 870, isoleucine 871, histidine 872, serine 873, glutamine 913, and glutamate 925. Residues glutamine 913, glutamate 925, and asparagine 927 each contribute to the Mg(2+) site. Positions 913, 925, and 927 each coordinate Mn(2+). Positions 1026 to 1162 constitute an MGS-like domain; sequence VELPREGTVF…VRPLQDYFRS (137 aa). Positions 1026–1162 are allosteric domain; the sequence is VELPREGTVF…VRPLQDYFRS (137 aa).

Belongs to the CarB family. Composed of two chains; the small (or glutamine) chain promotes the hydrolysis of glutamine to ammonia, which is used by the large (or ammonia) chain to synthesize carbamoyl phosphate. Tetramer of heterodimers (alpha,beta)4. Mg(2+) serves as cofactor. It depends on Mn(2+) as a cofactor.

It carries out the reaction hydrogencarbonate + L-glutamine + 2 ATP + H2O = carbamoyl phosphate + L-glutamate + 2 ADP + phosphate + 2 H(+). It catalyses the reaction hydrogencarbonate + NH4(+) + 2 ATP = carbamoyl phosphate + 2 ADP + phosphate + 2 H(+). It participates in amino-acid biosynthesis; L-arginine biosynthesis; carbamoyl phosphate from bicarbonate: step 1/1. Its pathway is pyrimidine metabolism; UMP biosynthesis via de novo pathway; (S)-dihydroorotate from bicarbonate: step 1/3. Functionally, large subunit of the glutamine-dependent carbamoyl phosphate synthetase (CPSase). CPSase catalyzes the formation of carbamoyl phosphate from the ammonia moiety of glutamine, carbonate, and phosphate donated by ATP, constituting the first step of 2 biosynthetic pathways, one leading to arginine and/or urea and the other to pyrimidine nucleotides. The large subunit (synthetase) binds the substrates ammonia (free or transferred from glutamine from the small subunit), hydrogencarbonate and ATP and carries out an ATP-coupled ligase reaction, activating hydrogencarbonate by forming carboxy phosphate which reacts with ammonia to form carbamoyl phosphate. In Brucella melitensis biotype 1 (strain ATCC 23456 / CCUG 17765 / NCTC 10094 / 16M), this protein is Carbamoyl phosphate synthase large chain.